The primary structure comprises 207 residues: Serotonin N-acetyltransferase (207 aa).

Phosphothreonine; by PKA is present on threonine 31. The N-acetyltransferase domain occupies 35–194; the sequence is SEFRCLTPQD…SLTFMELQCS (160 aa). Leucine 124 serves as a coordination point for substrate. Residues 124-126 and 132-137 each bind acetyl-CoA; these read LAV and QQGKGS. Position 159 (methionine 159) interacts with substrate. 168–170 is a binding site for acetyl-CoA; sequence YEK. At serine 205 the chain carries Phosphoserine.

The protein belongs to the acetyltransferase family. AANAT subfamily. As to quaternary structure, monomer. Interacts with several 14-3-3 proteins, including YWHAB, YWHAE, YWHAG and YWHAZ, preferentially when phosphorylated at Thr-31. Phosphorylation on Ser-205 also allows binding to YWHAZ, but with lower affinity. The interaction with YWHAZ considerably increases affinity for arylalkylamines and acetyl-CoA and protects the enzyme from dephosphorylation and proteasomal degradation. It may also prevent thiol-dependent inactivation. In terms of processing, cAMP-dependent phosphorylation on both N-terminal Thr-31 and C-terminal Ser-205 regulates AANAT activity by promoting interaction with 14-3-3 proteins. As to expression, highly expressed in pineal gland and retina. Also detected in heart and intestine.

The protein resides in the cytoplasm. The enzyme catalyses a 2-arylethylamine + acetyl-CoA = an N-acetyl-2-arylethylamine + CoA + H(+). It functions in the pathway aromatic compound metabolism; melatonin biosynthesis; melatonin from serotonin: step 1/2. Its function is as follows. Controls the night/day rhythm of melatonin production in the pineal gland. Catalyzes the N-acetylation of serotonin into N-acetylserotonin, the penultimate step in the synthesis of melatonin. In Mesocricetus auratus (Golden hamster), this protein is Serotonin N-acetyltransferase (AANAT).